We begin with the raw amino-acid sequence, 239 residues long: Ribonuclease 3 (239 aa).

An RNase III domain is found at 11 to 133 (HAAIQKKLGY…MFAAVSFDAD (123 aa)). Residue Glu-46 participates in Mg(2+) binding. Asp-50 is an active-site residue. Residues Asp-119 and Glu-122 each contribute to the Mg(2+) site. Residue Glu-122 is part of the active site. The DRBM domain occupies 160-230 (DGKTALQEAL…AKEALKWLEE (71 aa)).

The protein belongs to the ribonuclease III family. In terms of assembly, homodimer. Mg(2+) is required as a cofactor.

The protein localises to the cytoplasm. It catalyses the reaction Endonucleolytic cleavage to 5'-phosphomonoester.. Digests double-stranded RNA. Involved in the processing of primary rRNA transcript to yield the immediate precursors to the large and small rRNAs (23S and 16S). Also processes some mRNAs, and tRNAs when they are encoded in the rRNA operon. Functionally, CRISPR (clustered regularly interspaced short palindromic repeat) is an adaptive immune system that provides protection against mobile genetic elements (viruses, transposable elements and conjugative plasmids). CRISPR clusters contain spacers, sequences complementary to antecedent mobile elements, and target invading nucleic acids. CRISPR clusters are transcribed and processed into CRISPR RNA (crRNA). In this organism endogenous ribonuclease 3 and Cas9 are required for correct coprocessing of pre-crRNA and the trans-encoded small RNA (tracrRNA). Cas9, crRNA and tracrRNA are required for cleavage of invading DNA. Complements pre-crRNA and tracrRNA coprocessing defects in an rnc deletion in S.pyogenes strain 370. The chain is Ribonuclease 3 from Neisseria meningitidis serogroup A / serotype 4A (strain DSM 15465 / Z2491).